Consider the following 294-residue polypeptide: Acetyl-coenzyme A carboxylase carboxyl transferase subunit beta (294 aa).

The CoA carboxyltransferase N-terminal domain maps to 25–294; the sequence is VWTKCTSCEQ…PLVVPVDGSH (270 aa). Positions 29, 32, 48, and 51 each coordinate Zn(2+). Residues 29–51 form a C4-type zinc finger; that stretch reads CTSCEQVLYSAELERNLEVCPKC.

It belongs to the AccD/PCCB family. In terms of assembly, acetyl-CoA carboxylase is a heterohexamer composed of biotin carboxyl carrier protein (AccB), biotin carboxylase (AccC) and two subunits each of ACCase subunit alpha (AccA) and ACCase subunit beta (AccD). Zn(2+) serves as cofactor.

It is found in the cytoplasm. It catalyses the reaction N(6)-carboxybiotinyl-L-lysyl-[protein] + acetyl-CoA = N(6)-biotinyl-L-lysyl-[protein] + malonyl-CoA. It participates in lipid metabolism; malonyl-CoA biosynthesis; malonyl-CoA from acetyl-CoA: step 1/1. Component of the acetyl coenzyme A carboxylase (ACC) complex. Biotin carboxylase (BC) catalyzes the carboxylation of biotin on its carrier protein (BCCP) and then the CO(2) group is transferred by the transcarboxylase to acetyl-CoA to form malonyl-CoA. The polypeptide is Acetyl-coenzyme A carboxylase carboxyl transferase subunit beta (Aliivibrio fischeri (strain MJ11) (Vibrio fischeri)).